Here is a 455-residue protein sequence, read N- to C-terminus: Catalase-like protein (455 aa).

Residues 1 to 25 (MSQQDKKLTGVFGHPVSDRENSMTA) form a disordered region.

This sequence belongs to the catalase family.

Its function is as follows. Catalytically inactive. This Staphylococcus aureus protein is Catalase-like protein (katB).